A 605-amino-acid chain; its full sequence is Protein cueball (605 aa).

The N-terminal stretch at Met-1–Gly-31 is a signal peptide. 3 N-linked (GlcNAc...) asparagine glycosylation sites follow: Asn-27, Asn-64, and Asn-85. Over Glu-32–Gly-486 the chain is Extracellular. LDL-receptor class B repeat units follow at residues Glu-53–Asn-97, Arg-98–Arg-145, Arg-146–Ser-190, and Asp-191–Ala-236. N-linked (GlcNAc...) asparagine glycans are attached at residues Asn-261 and Asn-314. 2 consecutive EGF-like domains span residues Glu-322–Glu-359 and Glu-394–Glu-431. 5 disulfides stabilise this stretch: Cys-334–Cys-347, Cys-349–Cys-358, Cys-398–Cys-408, Cys-402–Cys-419, and Cys-421–Cys-430. Residues Asn-433 and Asn-464 are each glycosylated (N-linked (GlcNAc...) asparagine). The helical transmembrane segment at Pro-487–Val-507 threads the bilayer. Over His-508–Ser-605 the chain is Cytoplasmic.

It belongs to the cueball family.

It localises to the cell membrane. Functionally, has a role in spermatogenesis and oogenesis. The polypeptide is Protein cueball (Drosophila grimshawi (Hawaiian fruit fly)).